The sequence spans 159 residues: Secreted RxLR effector protein 50 (159 aa).

Residues 1 to 19 form the signal peptide; that stretch reads MRSSTVLYVLGAAILAVNG. The short motif at 38–54 is the RxLR-dEER element; it reads RWLRSNAMEHETDDEER.

It belongs to the RxLR effector family.

It localises to the secreted. Its subcellular location is the host nucleus. The protein localises to the host cytoplasm. Its function is as follows. Secreted effector that completely suppresses the host cell death induced by cell death-inducing proteins. This Plasmopara viticola (Downy mildew of grapevine) protein is Secreted RxLR effector protein 50.